Consider the following 283-residue polypeptide: Malonyl-[acyl-carrier protein] O-methyltransferase (283 aa).

Belongs to the methyltransferase superfamily.

The catalysed reaction is malonyl-[ACP] + S-adenosyl-L-methionine = malonyl-[ACP] methyl ester + S-adenosyl-L-homocysteine. The protein operates within cofactor biosynthesis; biotin biosynthesis. Converts the free carboxyl group of a malonyl-thioester to its methyl ester by transfer of a methyl group from S-adenosyl-L-methionine (SAM). It allows to synthesize pimeloyl-ACP via the fatty acid synthetic pathway. The sequence is that of Malonyl-[acyl-carrier protein] O-methyltransferase from Acetivibrio thermocellus (strain ATCC 27405 / DSM 1237 / JCM 9322 / NBRC 103400 / NCIMB 10682 / NRRL B-4536 / VPI 7372) (Clostridium thermocellum).